Consider the following 254-residue polypeptide: Phosphoribosylaminoimidazole-succinocarboxamide synthase (254 aa).

This sequence belongs to the SAICAR synthetase family.

The catalysed reaction is 5-amino-1-(5-phospho-D-ribosyl)imidazole-4-carboxylate + L-aspartate + ATP = (2S)-2-[5-amino-1-(5-phospho-beta-D-ribosyl)imidazole-4-carboxamido]succinate + ADP + phosphate + 2 H(+). It functions in the pathway purine metabolism; IMP biosynthesis via de novo pathway; 5-amino-1-(5-phospho-D-ribosyl)imidazole-4-carboxamide from 5-amino-1-(5-phospho-D-ribosyl)imidazole-4-carboxylate: step 1/2. The sequence is that of Phosphoribosylaminoimidazole-succinocarboxamide synthase from Bartonella henselae (strain ATCC 49882 / DSM 28221 / CCUG 30454 / Houston 1) (Rochalimaea henselae).